Here is a 495-residue protein sequence, read N- to C-terminus: Protein adenylyltransferase Fic (495 aa).

Residues 1-23 (MGTEAEPPSPPSPPAQQQEQANP) are disordered. Residues 36-58 (LYRLVLFFIAGSLTAWMFHAFSS) form a helical membrane-spanning segment. TPR repeat units lie at residues 121 to 154 (ALVS…APRH) and 155 to 189 (PEVL…SPSN). Positions 246–251 (SVGIEG) match the Inhibitory (S/T)XXXE(G/N) motif motif. ATP is bound by residues E250 and 331–334 (VGGH). The region spanning 300–435 (ITIKDILELH…IRPFVRFIAD (136 aa)) is the Fido domain. H378 is a catalytic residue. ATP contacts are provided by residues 382 to 389 (DGNGRTSR), 414 to 415 (YY), and N422.

This sequence belongs to the fic family. As to quaternary structure, homodimer.

The protein resides in the membrane. It carries out the reaction L-tyrosyl-[protein] + ATP = O-(5'-adenylyl)-L-tyrosyl-[protein] + diphosphate. It catalyses the reaction L-threonyl-[protein] + ATP = 3-O-(5'-adenylyl)-L-threonyl-[protein] + diphosphate. The catalysed reaction is 3-O-(5'-adenylyl)-L-threonyl-[protein] + H2O = L-threonyl-[protein] + AMP + H(+). The side chain of Glu-250 determines which of the two opposing activities (AMPylase or de-AMPylase) will take place. In response to endoplasmic reticulum stress, mediates de-AMPylase activity. Adenylyltransferase activity is inhibited by the inhibitory helix present at the N-terminus: Glu-250 binds ATP and competes with ATP-binding at Arg-389, thereby preventing adenylyltransferase activity. In unstressed cells, disengagement of Glu-250 promotes adenylyltransferase activity. Activation dissociates ATP-binding from Glu-250, allowing ordered binding of the entire ATP moiety with the alpha-phosphate in an orientation that is productive for accepting an incoming target hydroxyl side chain. In terms of biological role, protein that can both mediate the addition of adenosine 5'-monophosphate (AMP) to specific residues of target proteins (AMPylation), and the removal of the same modification from target proteins (de-AMPylation), depending on the context. The side chain of Glu-250 determines which of the two opposing activities (AMPylase or de-AMPylase) will take place. Acts as a key regulator of the unfolded protein response (UPR) by mediating AMPylation or de-AMPylation of Hsc70-3/BiP. In unstressed cells, acts as an adenylyltransferase by mediating AMPylation of Hsc70-3/BiP at 'Thr-518', thereby inactivating it. In response to endoplasmic reticulum stress, acts as a phosphodiesterase by mediating removal of ATP (de-AMPylation) from Hsc70-3/BiP at 'Thr-518', leading to restore HSPA5/BiP activity. The sequence is that of Protein adenylyltransferase Fic from Drosophila erecta (Fruit fly).